Consider the following 275-residue polypeptide: Ribosomal RNA small subunit methyltransferase A (275 aa).

S-adenosyl-L-methionine-binding residues include Asn-21, Leu-23, Gly-48, Glu-69, Asp-94, and Asn-115.

This sequence belongs to the class I-like SAM-binding methyltransferase superfamily. rRNA adenine N(6)-methyltransferase family. RsmA subfamily.

It localises to the cytoplasm. The catalysed reaction is adenosine(1518)/adenosine(1519) in 16S rRNA + 4 S-adenosyl-L-methionine = N(6)-dimethyladenosine(1518)/N(6)-dimethyladenosine(1519) in 16S rRNA + 4 S-adenosyl-L-homocysteine + 4 H(+). Functionally, specifically dimethylates two adjacent adenosines (A1518 and A1519) in the loop of a conserved hairpin near the 3'-end of 16S rRNA in the 30S particle. May play a critical role in biogenesis of 30S subunits. The polypeptide is Ribosomal RNA small subunit methyltransferase A (Clostridium botulinum (strain Okra / Type B1)).